We begin with the raw amino-acid sequence, 89 residues long: Large ribosomal subunit protein bL27 (89 aa).

The disordered stretch occupies residues 1–24; it reads MAHKKGTGSTRNGRDSRSQRLGVK.

It belongs to the bacterial ribosomal protein bL27 family.

This chain is Large ribosomal subunit protein bL27, found in Microcystis aeruginosa (strain NIES-843 / IAM M-2473).